A 693-amino-acid chain; its full sequence is Guanyl-specific ribonuclease pgl-3 (693 aa).

The tract at residues 205–447 (KKLMIEGPKI…VNRIIESLEK (243 aa)) is involved in dimerization. Histidine 437 (proton acceptor) is an active-site residue. Disordered stretches follow at residues 445–468 (LEKS…GPTT), 523–591 (AEKN…DATP), and 620–693 (SSNG…RGGS). The span at 447–468 (KSSSSEPSATAKQTTTSNGPTT) shows a compositional bias: low complexity. Composition is skewed to polar residues over residues 528–548 (NTPS…SPTK) and 569–580 (ITKVSPQPQERT). Positions 581–614 (GTAWGSGDATPVPLATPVNEYKVSGFGAAPVASG) are required for interaction with sepa-1. 3 stretches are compositionally biased toward gly residues: residues 625–634 (SGRGSYGGGR), 641–660 (RGAY…SRGY), and 668–693 (RGSY…RGGS). The interval 633 to 693 (GRGGDRGGRG…GFFGGSRGGS (61 aa)) is RNA-binding RGG-box.

May form a homodimer. Interacts with pgl-1 and pgl-2; this association is not required for P-granule localization of either pgl-1 or pgl-2. Interacts with sepa-1; the interaction is enhanced in the presence of RNA. Interacts with prmt-1; the interaction is direct. Methylated at arginine residues in the RNA-binding RGG-box by prmt-1. Methylation promotes P-granule degradation by autophagy. Highly expressed in the germline. Expressed in most somatic cells.

The protein resides in the cytoplasmic granule. The catalysed reaction is [RNA] containing guanosine + H2O = an [RNA fragment]-3'-guanosine-3'-phosphate + a 5'-hydroxy-ribonucleotide-3'-[RNA fragment].. Its function is as follows. Guanyl-specific endoribonuclease which cleaves the phosphodiester bond in single-stranded RNA between the 3'-guanylic residue and the 5'-OH residue of adjacent nucleotide, resulting in the formation of a corresponding 2',3'-cyclic phosphate intermediate. P-granule component involved in germline development. Together with the P-granule component pgl-1, is involved in the formation of P-granules. Together with pgl-1, probably recruits other granule components such as pos-1, mex-3 and glh-1, and RNA to P-granules. In vitro, binds mRNA; this interaction is required for the formation of liquid-like droplets that resemble P-granules. Most likely recruits pgl-1 into P-granules during autophagy. Associates with adapters such as sepa-1 and is required for the accumulation and degradation of P-granules by autophagy in somatic cells. This ensures exclusive localization of the P-granules in germ cells. In addition, may act redundantly with pgl-1 to protect germ cells from excessive germline apoptosis during normal oogenesis and development of the two gonadal arms. This may in part be through regulating the localization of sir-2.1 which is involved in germ cell apoptosis. May protect somatic cells from excessive apoptosis during normal development. In Caenorhabditis elegans, this protein is Guanyl-specific ribonuclease pgl-3.